Here is a 321-residue protein sequence, read N- to C-terminus: Protein-L-histidine N-pros-methyltransferase (321 aa).

The first 24 residues, 1–24, serve as a signal peptide directing secretion; it reads MRLWLCWLGCYTLLLWALRRRMWA. Asn89 carries N-linked (GlcNAc...) asparagine glycosylation. Glu177, Asn213, and Tyr298 together coordinate S-adenosyl-L-homocysteine.

It belongs to the METTL9 family.

Its subcellular location is the endoplasmic reticulum. The protein resides in the mitochondrion. It catalyses the reaction L-histidyl-[protein] + S-adenosyl-L-methionine = N(pros)-methyl-L-histidyl-[protein] + S-adenosyl-L-homocysteine + H(+). In terms of biological role, protein-histidine N-methyltransferase that specifically catalyzes 1-methylhistidine (pros-methylhistidine) methylation of target proteins. Mediates methylation of proteins with a His-x-His (HxH) motif (where 'x' is preferably a small amino acid); 1-methylhistidine modification may affect the binding of zinc and other metals to its target proteins. In Gallus gallus (Chicken), this protein is Protein-L-histidine N-pros-methyltransferase.